The sequence spans 1298 residues: Ras guanine nucleotide exchange factor Q (1298 aa).

5 disordered regions span residues 1-26 (MDINNNIDNITNSNNNIEKNNNINNF), 46-88 (NNNI…SIEG), 211-271 (NISN…GPLK), 314-384 (YTPP…QQQQ), and 459-533 (LSNG…STTT). Composition is skewed to low complexity over residues 211–245 (NISNNNNNNNNNSNNSNNNNNMSSSDNNNNSNSNN) and 315–384 (TPPS…QQQQ). The stretch at 352-389 (SSLNANNNTNNNNQQLQQQQQQQQQQQLQQQQQLTKSY) forms a coiled coil. Positions 473–482 (LHLSTESTTS) are enriched in polar residues. 2 stretches are compositionally biased toward low complexity: residues 483 to 501 (NNNNNNNNNNNNNNNNNNN) and 508 to 533 (TTNSATTTTTTTTTTTTTTTTNSTTT). In terms of domain architecture, N-terminal Ras-GEF spans 550–689 (DKDEVIAGER…YLKKAINDSG (140 aa)). Residues 723 to 801 (MSQSLQLKER…SSSSTTTTTT (79 aa)) form the DEP domain. Disordered stretches follow at residues 781–864 (SKSG…PNSI) and 884–920 (GIANGSSTPSIPSSVTSPLTNSKSTLNSTPSSSSNSF). The span at 783-864 (SGSSFSPSSS…ITSTSLPNSI (82 aa)) shows a compositional bias: low complexity. Positions 964-1193 (HPVEIARQLT…YKASHMIEQP (230 aa)) constitute a Ras-GEF domain. The interval 1214–1267 (TTTTTNNLNNNNNNNNPNNNNNNNNNSANNKSSPSPSPSSSPITSSPISSLTIN) is disordered.

Functionally, promotes the exchange of Ras-bound GDP by GTP. Seems to play a role in chemotaxis. In Dictyostelium discoideum (Social amoeba), this protein is Ras guanine nucleotide exchange factor Q (gefQ).